The sequence spans 87 residues: Small ribosomal subunit protein bS16 (87 aa).

It belongs to the bacterial ribosomal protein bS16 family.

The polypeptide is Small ribosomal subunit protein bS16 (Onion yellows phytoplasma (strain OY-M)).